We begin with the raw amino-acid sequence, 908 residues long: NADH-quinone oxidoreductase subunit G (908 aa).

The 82-residue stretch at 2–83 (ATIHVDGKEY…GTFISIDDEE (82 aa)) folds into the 2Fe-2S ferredoxin-type domain. [2Fe-2S] cluster is bound by residues C34, C45, C48, and C67. One can recognise a 4Fe-4S His(Cys)3-ligated-type domain in the interval 83 to 122 (EAKQFRESVVEWLMTNHPHDCPVCEEGGNCHLQDMTVMTG). [4Fe-4S] cluster-binding residues include H99, C103, C106, C112, C151, C154, C157, C201, C228, C231, C235, and C263. Residues 221–277 (MQFAPSICQQCSIGCNISPGERYGELRRIENRYNGTVNHYFLCDRGRFGYGYVNLKD) form the 4Fe-4S Mo/W bis-MGD-type domain.

This sequence belongs to the complex I 75 kDa subunit family. In terms of assembly, composed of 13 different subunits. Subunits NuoCD, E, F, and G constitute the peripheral sector of the complex. The cofactor is [2Fe-2S] cluster. It depends on [4Fe-4S] cluster as a cofactor.

It carries out the reaction a quinone + NADH + 5 H(+)(in) = a quinol + NAD(+) + 4 H(+)(out). NDH-1 shuttles electrons from NADH, via FMN and iron-sulfur (Fe-S) centers, to quinones in the respiratory chain. The immediate electron acceptor for the enzyme in this species is believed to be ubiquinone. Couples the redox reaction to proton translocation (for every two electrons transferred, four hydrogen ions are translocated across the cytoplasmic membrane), and thus conserves the redox energy in a proton gradient. The sequence is that of NADH-quinone oxidoreductase subunit G (nuoG) from Escherichia coli O157:H7.